A 130-amino-acid polypeptide reads, in one-letter code: Small ribosomal subunit protein uS8 (130 aa).

This sequence belongs to the universal ribosomal protein uS8 family. In terms of assembly, part of the 30S ribosomal subunit.

In terms of biological role, one of the primary rRNA binding proteins, it binds directly to 16S rRNA central domain where it helps coordinate assembly of the platform of the 30S subunit. The sequence is that of Small ribosomal subunit protein uS8 (rps8) from Methanocaldococcus jannaschii (strain ATCC 43067 / DSM 2661 / JAL-1 / JCM 10045 / NBRC 100440) (Methanococcus jannaschii).